The chain runs to 303 residues: Olfactory receptor 10A2 (303 aa).

The Extracellular portion of the chain corresponds to 1–12 (MSFSSLPTEIQS). A helical membrane pass occupies residues 13–33 (LLFLTFLTIYLVTLMGNCLII). Residues 34–41 (LVTLADPM) lie on the Cytoplasmic side of the membrane. Residues 42 to 62 (LHSPMYFFLRNLSFLEIGFNL) form a helical membrane-spanning segment. The Extracellular portion of the chain corresponds to 63–86 (VIVPKMLGTLLAQDTTISFLGCAT). The cysteines at positions 84 and 176 are disulfide-linked. The chain crosses the membrane as a helical span at residues 87-107 (QMYFFFFFGVAECFLLATMAY). Residues 108–126 (DRYVAICSPLHYPVIMNQR) lie on the Cytoplasmic side of the membrane. The helical transmembrane segment at 127–147 (TRAKLAAASWFPGFPVATVQT) threads the bilayer. Residues 148–184 (TWLFSFPFCGTNKVNHFFCDSPPVLRLVCADTALFEI) lie on the Extracellular side of the membrane. Residues 185–204 (YAIVGTILVVMIPCLLILCS) form a helical membrane-spanning segment. At 205-224 (YTHIAAAILKIPSAKGKNKA) the chain is on the cytoplasmic side. Residues 225-245 (FSTCSSHLLVVSLFYISLSLT) form a helical membrane-spanning segment. Residues 246–258 (YFRPKSNNSPEGK) are Extracellular-facing. Residues 259 to 279 (KLLSLSYTVMTPMLNPIIYSL) form a helical membrane-spanning segment. At 280-301 (RNNEVKNALSRTVSKALALRNC) the chain is on the cytoplasmic side.

This sequence belongs to the G-protein coupled receptor 1 family.

It localises to the cell membrane. In terms of biological role, odorant receptor. The sequence is that of Olfactory receptor 10A2 (OR10A2) from Homo sapiens (Human).